The sequence spans 115 residues: Nucleoid-associated protein tlr0723 (115 aa).

Belongs to the YbaB/EbfC family. In terms of assembly, homodimer.

Its subcellular location is the cytoplasm. The protein localises to the nucleoid. Binds to DNA and alters its conformation. May be involved in regulation of gene expression, nucleoid organization and DNA protection. The sequence is that of Nucleoid-associated protein tlr0723 from Thermosynechococcus vestitus (strain NIES-2133 / IAM M-273 / BP-1).